Consider the following 121-residue polypeptide: Small basic protein (121 aa).

3 consecutive transmembrane segments (helical) span residues 2-22 (WLPV…NLTI), 29-49 (YLSL…RAHL), and 57-77 (VFVS…FLGV).

This sequence belongs to the sbp family.

The protein localises to the cell membrane. The chain is Small basic protein (sbp) from Bacillus subtilis (strain 168).